We begin with the raw amino-acid sequence, 323 residues long: MTAAPHTAPRAVCLLGPTASGKTAAALALAERWPVEIISMDSALVYRDMDIGTAKPSRAEQAIAPHHLIDIIDPLDAYSAAQFATDAQALIEAIRARGRLPLIVGGTMLYYKALTQGLSDLPGADPAIRAEIDAEAARDGWPALHAKLAQVDPVTAARLHATDAQRIQRALELYRLTGQPMSALLAREAGAAAFHRHEAAAAYLSIALEPADRAVLHARIAQRFDAMLAGGLLDEVEALRRRGDLSPVLPSIRCVGYRQAWAYLDGEIDMATLREQGIAATRQLCKRQITWLRSTPERRVVDCLAPDYVDQVARLVRNALETP.

Residue 16–23 (GPTASGKT) coordinates ATP. 18 to 23 (TASGKT) serves as a coordination point for substrate. Interaction with substrate tRNA stretches follow at residues 41-44 (DSAL), 165-169 (QRIQR), 253-258 (RCVGYR), and 286-293 (KRQITWLR).

This sequence belongs to the IPP transferase family. As to quaternary structure, monomer. Mg(2+) serves as cofactor.

It carries out the reaction adenosine(37) in tRNA + dimethylallyl diphosphate = N(6)-dimethylallyladenosine(37) in tRNA + diphosphate. Catalyzes the transfer of a dimethylallyl group onto the adenine at position 37 in tRNAs that read codons beginning with uridine, leading to the formation of N6-(dimethylallyl)adenosine (i(6)A). This chain is tRNA dimethylallyltransferase, found in Ralstonia nicotianae (strain ATCC BAA-1114 / GMI1000) (Ralstonia solanacearum).